The primary structure comprises 652 residues: Complement component C1q receptor (652 aa).

The first 21 residues, 1 to 21 (MATSMGLLLLLLLLLTQPGAG), serve as a signal peptide directing secretion. Over 24–580 (ADTEAVVCVG…QNNDGTDGQK (557 aa)) the chain is Extracellular. One can recognise a C-type lectin domain in the interval 32-174 (VGTACYTAHS…CGSPGSPGSN (143 aa)). Cystine bridges form between C141–C165, C264–C275, C271–C285, C287–C300, C306–C317, C311–C328, C330–C343, C349–C358, C354–C367, C369–C383, C389–C400, C396–C409, C411–C425, C431–C443, C439–C452, and C454–C467. EGF-like domains are found at residues 260–301 (PKYG…VTCA) and 302–344 (SRNP…LDCV). N325 is a glycosylation site (N-linked (GlcNAc...) asparagine). The 40-residue stretch at 345 to 384 (DVDECQDSPCAQECVNTPGGFRCECWVGYEPGGPGEGACQ) folds into the EGF-like 3; calcium-binding domain. The EGF-like 4; calcium-binding domain occupies 385 to 426 (DVDECALGRSPCAQGCTNTDGSFHCSCEEGYVLAGEDGTQCQ). Positions 427-468 (DVDECVGPGGPLCDSLCFNTQGSFHCGCLPGWVLAPNGVSCT) constitute an EGF-like 5; calcium-binding domain. Disordered stretches follow at residues 472-546 (VSLG…VWRE) and 553-572 (TAAS…ATQN). A compositionally biased stretch (polar residues) spans 512–526 (ATPTTSRPSLSSDAP). Residues 581-601 (LLLFYILGTVVAILLLLALAL) traverse the membrane as a helical segment. At 602-652 (GLLVYRKRRAKREEKKEKKPQNAADSYSWVPERAESRAMENQYSPTPGTDC) the chain is on the cytoplasmic side. The segment at 611-652 (AKREEKKEKKPQNAADSYSWVPERAESRAMENQYSPTPGTDC) is disordered. Residues 612-621 (KREEKKEKKP) show a composition bias toward basic and acidic residues. The residue at position 627 (S627) is a Phosphoserine. Phosphotyrosine occurs at positions 628 and 644. The segment covering 640–652 (MENQYSPTPGTDC) has biased composition (polar residues).

In terms of assembly, homodimer. Interacts with C1QBP; the association may represent a cell surface C1q receptor. Interacts with surfactant protein A/SFTPA1. Interacts with multimerin-2/MMRN2. Interacts with DAG1; this interaction plays an important role in endothelial cell migration. Interacts with CBL. Interacts with IGFBP7. Interacts with VEGFR2. (Microbial infection) Interacts with hepatitis virus C/HCV core protein. In terms of processing, N- and O-glycosylated. Phosphorylated on Tyr-628 and Tyr-644 by SRC; these phosphorylations promote endothelial cell adhesion and migration. As to expression, highly expressed in endothelial cells, platelets, cells of myeloid origin, such as monocytes and neutrophils. Not expressed in cells of lymphoid origin.

The protein resides in the cell membrane. In terms of biological role, cell surface receptor that plays a role in various physiological processes including inflammation, phagocytosis, and cell adhesion. Plays a role in phagocytosis and enhances the uptake of apoptotic cells and immune complexes by acting as a receptor for defense collagens including surfactant protein A/SFTPA1, C1q, and mannose-binding lectin (MBL2). Plays a role in the regulation of endothelial cell function and adhesion by activating angiogenesis. Mechanistically, exerts its angiogenic function by associating with beta-dystroglycan, leading to SRC-dependent phosphorylation and subsequent recruitment of CBL. In turn, CBL provides a docking site for downstream signaling components, such as CRKL to enhance cell migration. Participates in angiogenesis also by acting as a receptor for the ECM pan-endothelial glycoprotein multimerin-2/MMRN2 and IGFBP7 ligands. Both ligands play a non-redundant role in CD93-mediated endothelial cell function. Acts as a key regulator of endothelial barrier function through modulating VEGFR2 function. The chain is Complement component C1q receptor (CD93) from Homo sapiens (Human).